Reading from the N-terminus, the 110-residue chain is MSDVLAELDKVLAQRKNAGDPESSYVAKLHHKGLNKILEKVGEECTETILAAKDAQHDSDTQHLIYETADLWFHSLVMLSHLGLSAEDVLNELARRFDLSGLEEKARRQS.

This sequence belongs to the PRA-PH family.

It localises to the cytoplasm. The catalysed reaction is 1-(5-phospho-beta-D-ribosyl)-ATP + H2O = 1-(5-phospho-beta-D-ribosyl)-5'-AMP + diphosphate + H(+). Its pathway is amino-acid biosynthesis; L-histidine biosynthesis; L-histidine from 5-phospho-alpha-D-ribose 1-diphosphate: step 2/9. The sequence is that of Phosphoribosyl-ATP pyrophosphatase from Teredinibacter turnerae (strain ATCC 39867 / T7901).